A 114-amino-acid polypeptide reads, in one-letter code: MHELGITQNIVAIVLEQARGASVKRVTLEIGKLSAIMPEAIRFCFDICCQDTLLEGVTLEIIETEGKGKCRHCGHEIRLSQPFGQCDRCDSFELDIIQGQELQIKEMEVEELCV.

His2 is a binding site for Ni(2+). Zn(2+)-binding residues include Cys70, Cys73, Cys86, and Cys89.

It belongs to the HypA/HybF family.

Its function is as follows. Involved in the maturation of [NiFe] hydrogenases. Required for nickel insertion into the metal center of the hydrogenase. This is Hydrogenase maturation factor HypA from Crocosphaera subtropica (strain ATCC 51142 / BH68) (Cyanothece sp. (strain ATCC 51142)).